Here is a 291-residue protein sequence, read N- to C-terminus: uncharacterized protein (291 aa).

The PNPLA domain maps to 5-196; sequence GVFSGGGVKG…LSNFPIWLFS (192 aa). A GXGXXG motif is present at residues 9–14; the sequence is GGGVKG. The helical transmembrane segment at 34-50 threads the bilayer; sequence VAGTSAGAIIAAFIASG. The GXSXG motif lies at 36-40; it reads GTSAG. Residue Ser38 is the Nucleophile of the active site. Asp183 serves as the catalytic Proton acceptor. Positions 183–185 match the DGA/G motif; it reads DGG.

The protein resides in the cell membrane. Functionally, probable lipid hydrolase. This is an uncharacterized protein from Bacillus subtilis (strain 168).